The primary structure comprises 505 residues: Phosphoglycerate kinase A (505 aa).

(2R)-3-phosphoglycerate is bound by residues V32, D33, F34, N35, R48, S70, H71, G73, R74, R224, H260, and R261. Residues G306 and A307 each contribute to the ADP site. G306 provides a ligand contact to CDP. A307 and K308 together coordinate AMP. A307 contacts ATP. A307 is a binding site for Mg(2+). K308 contributes to the (2R)-3-phosphoglycerate binding site. E311 provides a ligand contact to CDP. E311 contacts Mg(2+). The ADP site is built by K312 and G330. Residue K312 coordinates AMP. K312 lines the ATP pocket. A CDP-binding site is contributed by G330. Residues A331 and A403 each contribute to the AMP site. Residues A331 and A403 each contribute to the ATP site. Residues A403 and N427 each coordinate ADP. CDP-binding residues include G428 and F433. Positions 433, 434, 466, and 467 each coordinate ADP. Residue E434 coordinates AMP. The ATP site is built by E434, E466, and S467. E466 contacts Mg(2+).

The protein belongs to the phosphoglycerate kinase family. In terms of assembly, monomer. Requires Mg(2+) as cofactor.

The enzyme catalyses (2R)-3-phosphoglycerate + ATP = (2R)-3-phospho-glyceroyl phosphate + ADP. It functions in the pathway carbohydrate degradation; glycolysis; pyruvate from D-glyceraldehyde 3-phosphate: step 2/5. This Trypanosoma brucei brucei protein is Phosphoglycerate kinase A.